The following is a 160-amino-acid chain: UPF0262 protein BCAN_A0255 (160 aa).

Belongs to the UPF0262 family.

This Brucella canis (strain ATCC 23365 / NCTC 10854 / RM-666) protein is UPF0262 protein BCAN_A0255.